We begin with the raw amino-acid sequence, 266 residues long: Gasdermin bGSDM (266 aa).

Cys-4 carries S-palmitoyl cysteine lipidation. 4 consecutive transmembrane segments (beta stranded) span residues 69–85 (INGQ…GINI), 97–114 (AGIE…FEFS), 163–180 (EFTV…QLDV), and 189–205 (GKLK…TVTY). The C-terminal region stretch occupies residues 238–266 (AMALDAAGGVMPSDSALLDEGGLLDLEGF).

The protein belongs to the bacterial gasdermin family. As to quaternary structure, monomer in solution. Homooligomer; forms homooligomeric ring-shaped pores when inserted in membranes with 48-54 subunits per ring. In terms of processing, palmitoylation helps stabilize the inactive state; may self palmitoylate. Palmitoylation plays a significant role in pore formation.

The protein resides in the cytoplasm. Its subcellular location is the cell inner membrane. With respect to regulation, the full-length protein before cleavage is inactive: intramolecular interactions between the N-terminal domain and the C-terminal region as well as the lipid modification, mediate autoinhibition. The pyroptosis-like-inducing activity is carried by the released N-terminal domain (Gasdermin bGSDM, N-terminus). Functionally, precursor of a pore-forming protein involved in defense against bacteriophages. Expression of bGSDM and the neighboring protease gene (Ga0334635_1659) is toxic in E.coli. Cleavage of this precursor by its dedicated protease releases the active moiety (gasdermin bGSDM, N-terminus) which inserts into membranes, forming pores and triggering cell death. In terms of biological role, pore-forming protein that causes membrane permeabilization, probably via a pyroptosis-like activity. Makes ring-like pores with an interior pore diameter of 200-300 Angstroms, when integrated in liposomes. The protein is Gasdermin bGSDM of Vitiosangium sp. (strain GDMCC 1.1324).